The primary structure comprises 251 residues: SPbeta prophage-derived putative antirepressor protein YoqD (251 aa).

The sequence is that of SPbeta prophage-derived putative antirepressor protein YoqD (yoqD) from Bacillus subtilis (strain 168).